The following is a 376-amino-acid chain: Succinyl-diaminopimelate desuccinylase (376 aa).

Histidine 67 contributes to the Zn(2+) binding site. Aspartate 69 is an active-site residue. Aspartate 100 contacts Zn(2+). The active-site Proton acceptor is the glutamate 134. Zn(2+) contacts are provided by glutamate 135, glutamate 163, and histidine 349.

The protein belongs to the peptidase M20A family. DapE subfamily. In terms of assembly, homodimer. Zn(2+) is required as a cofactor. Requires Co(2+) as cofactor.

The catalysed reaction is N-succinyl-(2S,6S)-2,6-diaminopimelate + H2O = (2S,6S)-2,6-diaminopimelate + succinate. The protein operates within amino-acid biosynthesis; L-lysine biosynthesis via DAP pathway; LL-2,6-diaminopimelate from (S)-tetrahydrodipicolinate (succinylase route): step 3/3. Its function is as follows. Catalyzes the hydrolysis of N-succinyl-L,L-diaminopimelic acid (SDAP), forming succinate and LL-2,6-diaminopimelate (DAP), an intermediate involved in the bacterial biosynthesis of lysine and meso-diaminopimelic acid, an essential component of bacterial cell walls. This Shewanella woodyi (strain ATCC 51908 / MS32) protein is Succinyl-diaminopimelate desuccinylase.